A 440-amino-acid polypeptide reads, in one-letter code: Transposon Ty1-A Gag polyprotein (440 aa).

Polar residues-rich tracts occupy residues M1–S23, T48–S60, S71–Q93, and Q127–F152. Disordered stretches follow at residues M1–Q93, P126–P173, and G352–Y440. Low complexity predominate over residues T153–T165. The RNA-binding stretch occupies residues N299–H401. Residues N402–S418 are compositionally biased toward low complexity. At S416 the chain carries Phosphoserine. Over residues K419–N428 the composition is skewed to polar residues. A compositionally biased stretch (basic and acidic residues) spans N429 to Y440.

Homotrimer.

The protein localises to the cytoplasm. Functionally, capsid protein (CA) is the structural component of the virus-like particle (VLP), forming the shell that encapsulates the retrotransposons dimeric RNA genome. The particles are assembled from trimer-clustered units and there are holes in the capsid shells that allow for the diffusion of macromolecules. CA also has nucleocapsid-like chaperone activity, promoting primer tRNA(i)-Met annealing to the multipartite primer-binding site (PBS), dimerization of Ty1 RNA and initiation of reverse transcription. The chain is Transposon Ty1-A Gag polyprotein (TY1A-A) from Saccharomyces cerevisiae (strain ATCC 204508 / S288c) (Baker's yeast).